Reading from the N-terminus, the 330-residue chain is Zinc finger protein Gfi-1b (330 aa).

The tract at residues 1-20 (MPRSFLVKSKKAHTYHQPRA) is SNAG domain. Disordered regions lie at residues 1–21 (MPRSFLVKSKKAHTYHQPRAQ) and 75–99 (MASAPEGPLVTPQPQDGESPLSESP). An N6,N6-dimethyllysine modification is found at lysine 8. Residues 91-330 (GESPLSESPP…RHRESQHNLK (240 aa)) are interaction with ARIH2. 6 C2H2-type zinc fingers span residues 163 to 186 (YHCVKCNKVFSTPHGLEVHVRRSH), 192 to 214 (FACDVCGKTFGHAVSLEQHTHVH), 220 to 242 (FECRMCGKAFKRSSTLSTHLLIH), 248 to 270 (YPCQFCGKRFHQKSDMKKHTYIH), 276 to 298 (HKCQVCGKAFSQSSNLITHSRKH), and 304 to 327 (FSCELCTKGFQRKVDLRRHRESQH). Positions 164-330 (HCVKCNKVFS…RHRESQHNLK (167 aa)) are mediates interaction with GATA1.

In terms of assembly, interacts with histone methyltransferases EHMT2 and SUV39H1. Interacts with ARIH2 (via RING-type 2) and with RUNX1T1. Forms a complex with GATA1. Component of a RCOR-GFI-KDM1A-HDAC complex. Interacts directly with RCOR1, KDM1A and HDAC2. In terms of processing, methylation at Lys-8 in the SNAG domain seems required for the recruitment of the corepressor complex. As to expression, expressed in bone marrow and in spleen. Detected in hematopoietic stem cells, erythroblasts, and megakaryocytes. Expressed in thymocytes.

Its subcellular location is the nucleus. Essential proto-oncogenic transcriptional regulator necessary for development and differentiation of erythroid and megakaryocytic lineages. Component of a RCOR-GFI-KDM1A-HDAC complex that suppresses, via histone deacetylase (HDAC) recruitment, a number of genes implicated in multilineage blood cell development and controls hematopoietic differentiation. Transcriptional repressor or activator depending on both promoter and cell type context; represses promoter activity of SOCS1 and SOCS3 and thus, may regulate cytokine signaling pathways. Cooperates with GATA1 to repress target gene transcription, such as the apoptosis regulator BCL2L1; GFI1B silencing in leukemic cell lines markedly increase apoptosis rate. Inhibits down-regulation of MYC and MYB as well as the cyclin-dependent kinase inhibitor CDKN1A/P21WAF1 in IL6-treated myelomonocytic cells. Represses expression of GATA3 in T-cell lymphomas and inhibits GATA1-mediated transcription; as GATA1 also mediates erythroid GFI1B transcription, both GATA1 and GFI1B participate in a feedback regulatory pathway controlling the expression of GFI1B gene in erythroid cells. Suppresses GATA1-mediated stimulation of GFI1B promoter through protein interaction. Binds to gamma-satellite DNA and to its own promoter, auto-repressing its own expression. Alters histone methylation by recruiting histone methyltransferase to target genes promoters. Plays a role in heterochromatin formation. In Mus musculus (Mouse), this protein is Zinc finger protein Gfi-1b (Gfi1b).